The following is a 790-amino-acid chain: IQ motif and ubiquitin-like domain-containing protein (790 aa).

Over residues 1–17 the composition is skewed to polar residues; the sequence is MSNQPKKYETQNIANST. Positions 1–49 are disordered; sequence MSNQPKKYETQNIANSTEESDAFDIVTIPVPSEEPQESDQTEEHESGIE. Residues 130–206 form the Ubiquitin-like domain; that stretch reads ATVKVVLIPV…IQVEIFSTNP (77 aa). Residues 337–366 form the IQ domain; the sequence is RLKAVIVIQTYYRQWHAKIFVEDLRRQKSL.

In terms of assembly, component of the axonemal radial spoke 1 (RS1) complex, at least composed of spoke head proteins RSPH1, RSPH3, RSPH9 and the cilia-specific component RSPH4A or sperm-specific component RSPH6A, spoke stalk proteins RSPH14, DNAJB13, DYDC1, ROPN1L and NME5, and the anchor protein IQUB. Does not appear to be part of radial spoke complexes 2 or 3 (RS2 or RS3). Interacts with CALM1. Interacts with DNAJB13. Interacts with DYNLL2. Interacts with NME5. Interacts with RSPH3. Interacts with RSPH9. Interacts with ZMYND10. Interacts with calmodulin; the interaction occurs in conditions of low but not high calcium.

Its subcellular location is the cytoplasm. The protein resides in the cytoskeleton. It is found in the flagellum axoneme. It localises to the cell projection. The protein localises to the cilium. Adapter protein that anchors the radial spoke 1 (RS1) complex to the A microtubule of outer doublet microtubules in axonemes. The triple radial spokes (RS1, RS2 and RS3) are required to modulate beating of the sperm flagellum. May play a role in inhibiting signaling via MAPK1/ERK2 and MAPK3/ERK1. Additionally, may play a role in the functioning of cilia. Not required for the functioning of tracheal or ependymal cilia. This chain is IQ motif and ubiquitin-like domain-containing protein (IQUB), found in Macaca fascicularis (Crab-eating macaque).